We begin with the raw amino-acid sequence, 683 residues long: Methionine--tRNA ligase (683 aa).

Residues 15–25 (PYANGSIHLGH) carry the 'HIGH' region motif. Zn(2+) contacts are provided by Cys146, Cys149, Cys159, and Cys162. A 'KMSKS' region motif is present at residues 332-336 (KMSKS). Position 335 (Lys335) interacts with ATP. The region spanning 582 to 683 (DFAKVDLRIA…QGAQAGMRVM (102 aa)) is the tRNA-binding domain.

Belongs to the class-I aminoacyl-tRNA synthetase family. MetG type 1 subfamily. As to quaternary structure, homodimer. The cofactor is Zn(2+).

It localises to the cytoplasm. The enzyme catalyses tRNA(Met) + L-methionine + ATP = L-methionyl-tRNA(Met) + AMP + diphosphate. Functionally, is required not only for elongation of protein synthesis but also for the initiation of all mRNA translation through initiator tRNA(fMet) aminoacylation. This is Methionine--tRNA ligase from Vibrio cholerae serotype O1 (strain ATCC 39315 / El Tor Inaba N16961).